We begin with the raw amino-acid sequence, 290 residues long: Pyridoxal kinase PdxY (290 aa).

Residues Ser-12 and Thr-47–Gln-48 contribute to the substrate site. ATP contacts are provided by residues Asp-114, Glu-151, Lys-184, and Arg-211–Leu-214. Residue Asp-225 participates in substrate binding.

It belongs to the pyridoxine kinase family. PdxY subfamily. Homodimer. The cofactor is Mg(2+).

It carries out the reaction pyridoxal + ATP = pyridoxal 5'-phosphate + ADP + H(+). Its pathway is cofactor metabolism; pyridoxal 5'-phosphate salvage; pyridoxal 5'-phosphate from pyridoxal: step 1/1. In terms of biological role, pyridoxal kinase involved in the salvage pathway of pyridoxal 5'-phosphate (PLP). Catalyzes the phosphorylation of pyridoxal to PLP. This chain is Pyridoxal kinase PdxY, found in Pseudomonas putida (strain ATCC 47054 / DSM 6125 / CFBP 8728 / NCIMB 11950 / KT2440).